The chain runs to 144 residues: Putative pre-16S rRNA nuclease (144 aa).

Belongs to the YqgF nuclease family.

The protein localises to the cytoplasm. Functionally, could be a nuclease involved in processing of the 5'-end of pre-16S rRNA. In Blochmanniella pennsylvanica (strain BPEN), this protein is Putative pre-16S rRNA nuclease.